The primary structure comprises 201 residues: Guanylate kinase (201 aa).

Residues 2–180 enclose the Guanylate kinase-like domain; sequence SCLFVISAPS…AARDVASIVQ (179 aa). 9 to 16 contributes to the ATP binding site; it reads APSGAGKT.

Belongs to the guanylate kinase family.

The protein localises to the cytoplasm. The catalysed reaction is GMP + ATP = GDP + ADP. Essential for recycling GMP and indirectly, cGMP. This is Guanylate kinase from Nitrosomonas europaea (strain ATCC 19718 / CIP 103999 / KCTC 2705 / NBRC 14298).